The chain runs to 293 residues: Bifunctional protein FolD (293 aa).

NADP(+) is bound by residues 165–167 (GRS), Thr194, and Val235.

The protein belongs to the tetrahydrofolate dehydrogenase/cyclohydrolase family. As to quaternary structure, homodimer.

It carries out the reaction (6R)-5,10-methylene-5,6,7,8-tetrahydrofolate + NADP(+) = (6R)-5,10-methenyltetrahydrofolate + NADPH. It catalyses the reaction (6R)-5,10-methenyltetrahydrofolate + H2O = (6R)-10-formyltetrahydrofolate + H(+). It functions in the pathway one-carbon metabolism; tetrahydrofolate interconversion. Catalyzes the oxidation of 5,10-methylenetetrahydrofolate to 5,10-methenyltetrahydrofolate and then the hydrolysis of 5,10-methenyltetrahydrofolate to 10-formyltetrahydrofolate. The polypeptide is Bifunctional protein FolD (Syntrophus aciditrophicus (strain SB)).